The following is a 900-amino-acid chain: Nitrate reductase [NADH] (900 aa).

Cysteine 172 is a Mo-molybdopterin binding site. The 76-residue stretch at 521–596 (TKMYSLSEVK…LEDYRVGELI (76 aa)) folds into the Cytochrome b5 heme-binding domain. Histidine 556 and histidine 579 together coordinate heme. The FAD-binding FR-type domain occupies 644 to 756 (REKIPCKLIS…KGPLGHIEYT (113 aa)). Residues 696–699 (RAYT), 713–717 (VVKVY), phenylalanine 718, phenylalanine 725, 730–732 (AMS), and threonine 783 contribute to the FAD site.

Belongs to the nitrate reductase family. In terms of assembly, homodimer. Requires FAD as cofactor. Heme serves as cofactor. It depends on Mo-molybdopterin as a cofactor.

It carries out the reaction nitrite + NAD(+) + H2O = nitrate + NADH + H(+). Its function is as follows. Nitrate reductase is a key enzyme involved in the first step of nitrate assimilation in plants, fungi and bacteria. This is Nitrate reductase [NADH] (NIA) from Lotus japonicus (Lotus corniculatus var. japonicus).